A 104-amino-acid polypeptide reads, in one-letter code: L-rhamnose mutarotase (104 aa).

Tyr18 provides a ligand contact to substrate. His22 functions as the Proton donor in the catalytic mechanism. Residues Tyr41 and 76-77 contribute to the substrate site; that span reads WW.

This sequence belongs to the rhamnose mutarotase family. Homodimer.

The protein resides in the cytoplasm. It catalyses the reaction alpha-L-rhamnose = beta-L-rhamnose. It functions in the pathway carbohydrate metabolism; L-rhamnose metabolism. In terms of biological role, involved in the anomeric conversion of L-rhamnose. This chain is L-rhamnose mutarotase, found in Escherichia coli O7:K1 (strain IAI39 / ExPEC).